Here is a 488-residue protein sequence, read N- to C-terminus: MSFNHKTIEELHDLLVAKEISATELTQKTLEDIKSREEAVGSFITVSEEAALKQAAAIDAKGIDADNLMSGIPLAVKDNISTKGILTTAASKMLYNYEPIFDATSVANAYAKDMIVIGKTNMDEFAMGGSTETSYFKKTKNAWDHTKVPGGSSGGSATAVASGQVRLSLGSDTGGSIRQPAAFNGVVGLKPTYGTVSRYGLIAFGSSLDQIGPFAPTVKENAQLLNVIASSDVKDATSAPVRIADYTSKIGRDIKGMKIALPKEYLGEGIDPEIKETVLAAAKQFEALGATVEEVSLPHSKYGVAVYYIIASSEASSNLQRFDGIRYGFRADDAKNLDEIYVNTRSQGFGDEVKRRIMLGTFSLSSGYYDAYFKKAGQVRTLIIEDFDKVFADYDLILGPTTPTVAFGLDTLNHDPVAMYLADLLTIPVNLAGLPGISIPAGFVDGLPVGLQLIGPKYAEETIYQAAAAFEAVTDYHKQQPIIFGGDK.

Active-site charge relay system residues include Lys-77 and Ser-152. Residue Ser-176 is the Acyl-ester intermediate of the active site.

It belongs to the amidase family. GatA subfamily. Heterotrimer of A, B and C subunits.

It catalyses the reaction L-glutamyl-tRNA(Gln) + L-glutamine + ATP + H2O = L-glutaminyl-tRNA(Gln) + L-glutamate + ADP + phosphate + H(+). Its function is as follows. Allows the formation of correctly charged Gln-tRNA(Gln) through the transamidation of misacylated Glu-tRNA(Gln) in organisms which lack glutaminyl-tRNA synthetase. The reaction takes place in the presence of glutamine and ATP through an activated gamma-phospho-Glu-tRNA(Gln). This is Glutamyl-tRNA(Gln) amidotransferase subunit A from Streptococcus pyogenes serotype M28 (strain MGAS6180).